Reading from the N-terminus, the 621-residue chain is Type 2 DNA topoisomerase 6 subunit B (621 aa).

ATP-binding positions include asparagine 48, aspartate 80, 101 to 102, 111 to 118, and lysine 435; these read SR and GQQGIGIS.

This sequence belongs to the TOP6B family. In terms of assembly, homodimer. Heterotetramer of two Top6A and two Top6B chains.

It catalyses the reaction ATP-dependent breakage, passage and rejoining of double-stranded DNA.. Its function is as follows. Relaxes both positive and negative superturns and exhibits a strong decatenase activity. This is Type 2 DNA topoisomerase 6 subunit B from Methanosarcina acetivorans (strain ATCC 35395 / DSM 2834 / JCM 12185 / C2A).